The chain runs to 720 residues: MNTILMIPTGEGVGLTSACLGLIYALDCNGIKAGFLKPFSQELPNQVDRTTSLFSHLFQGKTVTSISHEKVLQRLALGERDELLEEAVSIHRNVAANYDVIIVEGLLPNAQDHFATELNAALAQALDAKVVLVSTADVQNPRRTAEKIEAHLHHFGGVSSNRTAGVLFMRTRGLPEETAQIPLTIDPSLRLNTEIAAFSQELQRYNRNLGTTTLPIIGLVPFSNTLSVPRTLDIASIIEGDWIHQGEARHRRILHSSLIASSIEYELNKFVAGELIISASERTDVLLASSLATSNGIPLAGLVLTERKAPNPQILDFCQHAIKQGLPILHTQLNTLETAQRLADFGNEIPVDDTERAEQVTRFVSSHIDTAWLNSQINTGVQPRLSPSAFRHELVQKSIAAKKRIVLPEGDEPRTVQAAAICQSRGIAHCILLAKPEAVVEVAKARGIELPDDLEIIDPDLIRNQYITPMVELRNGKLNELQAKEQLQDTVVLGTMMLALDQVDGLVSGAIHTTANTVRPAFQLIKTAPDYSLVSSVFFMLLPDEVYVYGDCAINPDPDADQLAEIAIQSADSAKAFGINPRIAMISYSTGTSGAGADVEKVAKATEIAKQRRPDLLIDGPLQYDAASVESVGRQKAPDSQVAGRANVFIFPDLNTGNTTYKAVQRSANVVSVGPMLQGLNKPVNDLSRGALVDDIVFTIALTAIQAEQQLEAKAAALAS.

The segment at 389 to 720 is phosphate acetyltransferase; that stretch reads AFRHELVQKS…LEAKAAALAS (332 aa).

It in the N-terminal section; belongs to the CobB/CobQ family. In the C-terminal section; belongs to the phosphate acetyltransferase and butyryltransferase family. Homohexamer.

Its subcellular location is the cytoplasm. It carries out the reaction acetyl-CoA + phosphate = acetyl phosphate + CoA. It participates in metabolic intermediate biosynthesis; acetyl-CoA biosynthesis; acetyl-CoA from acetate: step 2/2. Its function is as follows. Involved in acetate metabolism. This Acinetobacter baylyi (strain ATCC 33305 / BD413 / ADP1) protein is Phosphate acetyltransferase (pta).